We begin with the raw amino-acid sequence, 206 residues long: GTP cyclohydrolase 1 (206 aa).

Positions 1-17 are enriched in basic and acidic residues; that stretch reads MDAVTPKKDIPRPDSVR. A disordered region spans residues 1–23; that stretch reads MDAVTPKKDIPRPDSVRRPSQQE. Zn(2+)-binding residues include Cys95, His98, and Cys166.

It belongs to the GTP cyclohydrolase I family. As to quaternary structure, toroid-shaped homodecamer, composed of two pentamers of five dimers.

The enzyme catalyses GTP + H2O = 7,8-dihydroneopterin 3'-triphosphate + formate + H(+). The protein operates within cofactor biosynthesis; 7,8-dihydroneopterin triphosphate biosynthesis; 7,8-dihydroneopterin triphosphate from GTP: step 1/1. The polypeptide is GTP cyclohydrolase 1 (Hyphomonas neptunium (strain ATCC 15444)).